Reading from the N-terminus, the 31-residue chain is Aspartate aminotransferase, cytoplasmic (31 aa).

It belongs to the class-I pyridoxal-phosphate-dependent aminotransferase family. As to quaternary structure, homodimer. Pyridoxal 5'-phosphate is required as a cofactor.

The protein localises to the cytoplasm. It carries out the reaction L-aspartate + 2-oxoglutarate = oxaloacetate + L-glutamate. The enzyme catalyses L-cysteine + 2-oxoglutarate = 2-oxo-3-sulfanylpropanoate + L-glutamate. It catalyses the reaction (2S)-2-aminobutanoate + 2-oxoglutarate = 2-oxobutanoate + L-glutamate. The catalysed reaction is 3-sulfino-L-alanine + 2-oxoglutarate = 3-sulfinopyruvate + L-glutamate. Its function is as follows. Biosynthesis of L-glutamate from L-aspartate or L-cysteine. Important regulator of levels of glutamate, the major excitatory neurotransmitter of the vertebrate central nervous system. Acts as a scavenger of glutamate in brain neuroprotection. The aspartate aminotransferase activity is involved in hepatic glucose synthesis during development and in adipocyte glyceroneogenesis. Using L-cysteine as substrate, regulates levels of mercaptopyruvate, an important source of hydrogen sulfide. Mercaptopyruvate is converted into H(2)S via the action of 3-mercaptopyruvate sulfurtransferase (3MST). Hydrogen sulfide is an important synaptic modulator and neuroprotectant in the brain. This is Aspartate aminotransferase, cytoplasmic from Oryctolagus cuniculus (Rabbit).